A 410-amino-acid chain; its full sequence is Protein disulfide isomerase CRELD1 (410 aa).

The signal sequence occupies residues 1–29 (MGMSRRMFLTVYGSLWLLLLLSRPGVSKP). The Extracellular segment spans residues 30-352 (QLCQTCQNLV…GLFDDITDDE (323 aa)). The CXXC signature appears at 32-35 (CQTC). Cystine bridges form between Cys-32–Cys-35, Cys-141–Cys-155, Cys-149–Cys-167, and Cys-169–Cys-178. Residues 139–179 (LSCPGGTEKPCSGNGQCNGDGTRFGTGVCDCYTSYGGPVCM) form the EGF-like 1 domain. FU repeat units lie at residues 194-243 (HLVC…DHCK) and 254-301 (SYEC…ELPK). The short motif at 264–267 (CIGC) is the CXXC element. Disulfide bonds link Cys-264–Cys-267, Cys-295–Cys-309, Cys-302–Cys-318, and Cys-320–Cys-331. The region spanning 291–332 (DVDECDSELPKCKGSHEECVNTEGSFTCVCEKDYSRIDGMCR) is the EGF-like 2; calcium-binding domain. A helical membrane pass occupies residues 353–373 (VVVLQQMFFGVVICALATLAA). A topological domain (cytoplasmic) is located at residue Lys-374. A helical transmembrane segment spans residues 375-395 (GDMVFTAIFIGAVAAMAGYWL). Residues 396–410 (SEKGDRALDSFMKGR) lie on the Extracellular side of the membrane.

It belongs to the CRELD family.

Its subcellular location is the membrane. The enzyme catalyses Catalyzes the rearrangement of -S-S- bonds in proteins.. Its function is as follows. Protein disulfide isomerase. Promotes the localization of acetylcholine receptors (AChRs) to the plasma membrane. In Xenopus tropicalis (Western clawed frog), this protein is Protein disulfide isomerase CRELD1 (creld1).